We begin with the raw amino-acid sequence, 212 residues long: MNLFRFLGDLSHLLAIILLLLKIWKSRSCAGISGKSQVLFAVVFTARYLDLFTNYISLYNTCMKVVYIACSFTTVWMIYSKFKATYDGNHDTFRVEFLVVPTAVLAFLVNHDFTPLEILWTFSIYLESVAILPQLFMVSKTGEAETITSHYLFALGVYRTLYLFNWIWRYHFEGFFDLIAIVAGLVQTVLYCDFFYLYITKVLKGKKLSLPA.

Residues 1–4 (MNLF) lie on the Lumenal side of the membrane. Residues 5–24 (RFLGDLSHLLAIILLLLKIW) form a helical membrane-spanning segment. Residues 25-32 (KSRSCAGI) lie on the Cytoplasmic side of the membrane. A helical transmembrane segment spans residues 33-52 (SGKSQVLFAVVFTARYLDLF). The interval 47–48 (RY) is interaction with the K-D-E-L motif on target proteins. Topologically, residues 53-58 (TNYISL) are lumenal. Residues 59–79 (YNTCMKVVYIACSFTTVWMIY) form a helical membrane-spanning segment. Residues 80–92 (SKFKATYDGNHDT) are Cytoplasmic-facing. A helical membrane pass occupies residues 93–110 (FRVEFLVVPTAVLAFLVN). Residues 111–116 (HDFTPL) lie on the Lumenal side of the membrane. A helical membrane pass occupies residues 117-135 (EILWTFSIYLESVAILPQL). Residues 136–149 (FMVSKTGEAETITS) are Cytoplasmic-facing. A helical transmembrane segment spans residues 150–168 (HYLFALGVYRTLYLFNWIW). Positions 159-169 (RTLYLFNWIWR) are interaction with the K-D-E-L motif on target proteins. At 169 to 178 (RYHFEGFFDL) the chain is on the lumenal side. The chain crosses the membrane as a helical span at residues 179-199 (IAIVAGLVQTVLYCDFFYLYI). The Cytoplasmic portion of the chain corresponds to 200–212 (TKVLKGKKLSLPA). The tract at residues 204-207 (KGKK) is important for recycling of cargo proteins with the sequence motif K-D-E-L from the Golgi to the endoplasmic reticulum. The residue at position 209 (Ser209) is a Phosphoserine; by PKA.

Belongs to the ERD2 family. As to quaternary structure, upon ligand binding the receptor oligomerizes and interacts with components of the transport machinery such as ARFGAP1 and ARF1. In terms of processing, phosphorylation by PKA at Ser-209 is required for endoplasmic reticulum retention function.

It localises to the golgi apparatus membrane. The protein localises to the cytoplasmic vesicle. Its subcellular location is the COPI-coated vesicle membrane. The protein resides in the endoplasmic reticulum membrane. It is found in the endoplasmic reticulum-Golgi intermediate compartment membrane. Functionally, receptor for the C-terminal sequence motif K-D-E-L that is present on endoplasmic reticulum resident proteins and that mediates their recycling from the Golgi back to the endoplasmic reticulum. The sequence is that of ER lumen protein-retaining receptor 1 (Kdelr1) from Rattus norvegicus (Rat).